Here is a 306-residue protein sequence, read N- to C-terminus: uncharacterized protein (306 aa).

This is an uncharacterized protein from Haemophilus influenzae (strain ATCC 51907 / DSM 11121 / KW20 / Rd).